Consider the following 483-residue polypeptide: Dual specificity protein phosphatase CDC14C (483 aa).

The interval 1–45 (MKRKSEGRSSWAAATCSPCCSLTSPSVKKIRSPTQQDPRHRDPQD) is disordered. A Nucleolar localization signal motif is present at residues 1–53 (MKRKSEGRSSWAAATCSPCCSLTSPSVKKIRSPTQQDPRHRDPQDDVYLDITD). Residues 12-26 (AAATCSPCCSLTSPS) show a composition bias toward low complexity. The interval 43-197 (PQDDVYLDIT…AMQYGFLNFN (155 aa)) is a. Residues 198 to 211 (SFNLDEYEHYEKAE) form a linker region. The interval 212–378 (NGDLNWIIPD…EGDYFCQKLK (167 aa)) is b. Positions 213 to 373 (GDLNWIIPDR…TSLWLEGDYF (161 aa)) constitute a Tyrosine-protein phosphatase domain. C313 serves as the catalytic Phosphocysteine intermediate. The segment at 407–426 (QDQQEPEPYSDDDEINGGTQ) is disordered. The span at 408–421 (DQQEPEPYSDDDEI) shows a compositional bias: acidic residues. The helical transmembrane segment at 444–466 (ILLTCPLAVLTSALCSVVIWWIV) threads the bilayer.

This sequence belongs to the protein-tyrosine phosphatase family. Non-receptor class CDC14 subfamily.

It localises to the membrane. It is found in the nucleus. Its subcellular location is the nucleolus. The protein localises to the cytoplasm. The protein resides in the cytoskeleton. It carries out the reaction O-phospho-L-tyrosyl-[protein] + H2O = L-tyrosyl-[protein] + phosphate. The enzyme catalyses O-phospho-L-seryl-[protein] + H2O = L-seryl-[protein] + phosphate. The catalysed reaction is O-phospho-L-threonyl-[protein] + H2O = L-threonyl-[protein] + phosphate. Dual-specificity phosphatase. Preferentially dephosphorylates proteins modified by proline-directed kinases. In Symphalangus syndactylus (Siamang), this protein is Dual specificity protein phosphatase CDC14C.